Consider the following 178-residue polypeptide: Large ribosomal subunit protein uL6 (178 aa).

The protein belongs to the universal ribosomal protein uL6 family. In terms of assembly, part of the 50S ribosomal subunit.

Its function is as follows. This protein binds to the 23S rRNA, and is important in its secondary structure. It is located near the subunit interface in the base of the L7/L12 stalk, and near the tRNA binding site of the peptidyltransferase center. This is Large ribosomal subunit protein uL6 from Nitrosococcus oceani (strain ATCC 19707 / BCRC 17464 / JCM 30415 / NCIMB 11848 / C-107).